The chain runs to 367 residues: Phosphoribosylaminoimidazole-succinocarboxamide synthase (367 aa).

It belongs to the SAICAR synthetase family.

It carries out the reaction 5-amino-1-(5-phospho-D-ribosyl)imidazole-4-carboxylate + L-aspartate + ATP = (2S)-2-[5-amino-1-(5-phospho-beta-D-ribosyl)imidazole-4-carboxamido]succinate + ADP + phosphate + 2 H(+). Its pathway is purine metabolism; IMP biosynthesis via de novo pathway; 5-amino-1-(5-phospho-D-ribosyl)imidazole-4-carboxamide from 5-amino-1-(5-phospho-D-ribosyl)imidazole-4-carboxylate: step 1/2. This chain is Phosphoribosylaminoimidazole-succinocarboxamide synthase, found in Vibrio campbellii (strain ATCC BAA-1116).